Here is an 81-residue protein sequence, read N- to C-terminus: U17-lycotoxin-Ls1a (81 aa).

The first 22 residues, 1–22 (MSSKVQAVLLLVGVITFLAVHA), serve as a signal peptide directing secretion. The propeptide occupies 23–34 (QEELSENTESER). 3 cysteine pairs are disulfide-bonded: C36–C51, C50–C67, and C58–C65.

Belongs to the neurotoxin 02 (plectoxin) family. In terms of tissue distribution, expressed by the venom gland.

The protein resides in the secreted. This is U17-lycotoxin-Ls1a from Lycosa singoriensis (Wolf spider).